The following is a 201-amino-acid chain: Recombination protein RecR (201 aa).

The C4-type zinc finger occupies 60 to 75 (CKSCGNIDTRNPCTVC). In terms of domain architecture, Toprim spans 83–178 (SIIVVVADVA…KVTRLAHGVP (96 aa)).

The protein belongs to the RecR family.

May play a role in DNA repair. It seems to be involved in an RecBC-independent recombinational process of DNA repair. It may act with RecF and RecO. In Rhodopseudomonas palustris (strain BisB5), this protein is Recombination protein RecR.